Reading from the N-terminus, the 613-residue chain is RNA polymerase-associated protein RTF1 homolog (613 aa).

2 disordered regions span residues 1-90 (MSSS…DKAR) and 121-247 (QQLA…KDKI). Basic residues predominate over residues 55–68 (PAKKKTLTKRKRRA). Over residues 72-81 (SDDDQVDDDL) the composition is skewed to acidic residues. Positions 167 to 176 (AAFHRPSDIN) are enriched in basic and acidic residues. Residues 175–209 (INRKHKEKNAMDALKNKRKEIEKKNAKNEALSIDA) are a coiled coil. Low complexity predominate over residues 215–235 (SGSSSSSSSSESSRSSSSSRE). The segment covering 236-247 (SSPERVSEKDKI) has biased composition (basic and acidic residues). A Plus3 domain is found at 252–383 (VDGLSELRRA…KKQDIEKAIN (132 aa)). Residues 425–462 (RGDIREAEQIQTKIDEIERQADELEKERSKSISAIAFI) adopt a coiled-coil conformation. Disordered stretches follow at residues 485–549 (SQDD…KTDI) and 564–613 (LKDF…SSAV). The segment covering 510-521 (TLSASSSTTNLS) has biased composition (low complexity). Residues 569 to 586 (TPESSGNKRPSISSSKGV) show a composition bias toward polar residues. Low complexity predominate over residues 602–613 (GSSTSAAPSSAV).

In terms of assembly, component of the PAF1 complex which consists of at least cdc-73, ctr-9, leo-1, pafo-1 and rtfo-1.

Its subcellular location is the nucleus. Its function is as follows. Component of the PAF1 complex which is a multifunctional complex involved in transcription initiation via genetic interactions with TATA-binding proteins, elongation and transcription-coupled histone modification. The sequence is that of RNA polymerase-associated protein RTF1 homolog from Caenorhabditis elegans.